The following is a 140-amino-acid chain: Putative cell wall protein (140 aa).

The N-terminal stretch at 1–21 (MASSLITSAVIVVVLSLVLGS) is a signal peptide. Residues 85 to 98 (TGGGIPSYNGGQGA) show a composition bias toward gly residues. The disordered stretch occupies residues 85–140 (TGGGIPSYNGGQGAGPHTQLPGGDDTLVPNPGFEAPTPTIGAGTGSNGQVPPVPLP).

In terms of tissue distribution, inflorescence.

Its subcellular location is the secreted. The protein localises to the cell wall. The chain is Putative cell wall protein from Arabidopsis thaliana (Mouse-ear cress).